The primary structure comprises 100 residues: MTERFTGRLADVIRRPLITEKATRALEQNQYTFEVDHRAAKPDIKAAVEQLFDVKVTGISTMNPPRRSRRIGRFAGKRAQVKKAVVRLAEGNSIQLFPES.

Belongs to the universal ribosomal protein uL23 family. In terms of assembly, part of the 50S ribosomal subunit. Contacts protein L29, and trigger factor when it is bound to the ribosome.

Functionally, one of the early assembly proteins it binds 23S rRNA. One of the proteins that surrounds the polypeptide exit tunnel on the outside of the ribosome. Forms the main docking site for trigger factor binding to the ribosome. This Synechococcus sp. (strain CC9311) protein is Large ribosomal subunit protein uL23.